Here is a 541-residue protein sequence, read N- to C-terminus: Calcium-dependent protein kinase 26 (541 aa).

Positions 1 to 11 (MGQCCTGGGKA) are enriched in gly residues. The tract at residues 1-74 (MGQCCTGGGK…AGPIGEVLER (74 aa)) is disordered. Residue G2 is the site of N-myristoyl glycine attachment. Residues 38-67 (AKQQPCSPAAKAAATEAAAAASSSKKPAGP) are compositionally biased toward low complexity. The Protein kinase domain maps to 83–341 (YSIGKELGRG…AFQVLNHPWI (259 aa)). Residues 89–97 (LGRGQFGVT) and K112 contribute to the ATP site. D207 (proton acceptor) is an active-site residue. The autoinhibitory domain stretch occupies residues 347–377 (APDVPLDNVVLNRLKQFRAMNQFKKAALRII). EF-hand domains are found at residues 384–419 (EEIK…QGTK), 420–455 (FSDN…MNKM), 456–491 (DREE…QGLY), and 493–526 (ANEI…GSGC). D397, D399, S401, T403, E408, D433, D435, N437, E444, D469, D471, S473, Y475, E480, D504, N506, D508, R510, and E515 together coordinate Ca(2+).

This sequence belongs to the protein kinase superfamily. Ser/Thr protein kinase family. CDPK subfamily. Specifically expressed in heading panicles, spikelets and mature pollen grains. Not expressed in vegetative tissues.

It is found in the membrane. The catalysed reaction is L-seryl-[protein] + ATP = O-phospho-L-seryl-[protein] + ADP + H(+). It carries out the reaction L-threonyl-[protein] + ATP = O-phospho-L-threonyl-[protein] + ADP + H(+). With respect to regulation, activated by calcium. Autophosphorylation may play an important role in the regulation of the kinase activity. May play a role in signal transduction pathways that involve calcium as a second messenger. The sequence is that of Calcium-dependent protein kinase 26 from Oryza sativa subsp. japonica (Rice).